Consider the following 293-residue polypeptide: Ribosomal RNA small subunit methyltransferase A (293 aa).

Asn-33, Val-35, Gly-60, Glu-81, Asp-111, and Asn-130 together coordinate S-adenosyl-L-methionine.

Belongs to the class I-like SAM-binding methyltransferase superfamily. rRNA adenine N(6)-methyltransferase family. RsmA subfamily.

The protein resides in the cytoplasm. It catalyses the reaction adenosine(1518)/adenosine(1519) in 16S rRNA + 4 S-adenosyl-L-methionine = N(6)-dimethyladenosine(1518)/N(6)-dimethyladenosine(1519) in 16S rRNA + 4 S-adenosyl-L-homocysteine + 4 H(+). Its function is as follows. Specifically dimethylates two adjacent adenosines (A1518 and A1519) in the loop of a conserved hairpin near the 3'-end of 16S rRNA in the 30S particle. May play a critical role in biogenesis of 30S subunits. This chain is Ribosomal RNA small subunit methyltransferase A, found in Corynebacterium glutamicum (strain ATCC 13032 / DSM 20300 / JCM 1318 / BCRC 11384 / CCUG 27702 / LMG 3730 / NBRC 12168 / NCIMB 10025 / NRRL B-2784 / 534).